We begin with the raw amino-acid sequence, 986 residues long: Vacuolar membrane protease (986 aa).

Residues 1–16 (MAPLRLSRANPLAFAR) are Cytoplasmic-facing. Residues 17-37 (WPVTLITAVVYLAFLIPLLIV) form a helical membrane-spanning segment. The Vacuolar segment spans residues 38 to 392 (HHVVPSPPTA…TTFVLFELHT (355 aa)). An N-linked (GlcNAc...) asparagine glycan is attached at Asn121. Zn(2+)-binding residues include His176 and Asp188. The Proton acceptor role is filled by Glu222. Zn(2+) contacts are provided by Glu223, Glu248, and His321. A helical transmembrane segment spans residues 393–413 (LFALSVTLLVVAPLALLVTGI). At 414–444 (ALTRADKMYLFRTSAKADESLDSVPLQGLRG) the chain is on the cytoplasmic side. The helical transmembrane segment at 445–465 (FFRFPFLFAIPTAVTVGLAYL) threads the bilayer. Residues 466-475 (VTKVNPLIIH) lie on the Vacuolar side of the membrane. Residues 476–496 (SSEYAVWSMMLSAWTFLAWFV) form a helical membrane-spanning segment. Over 497–510 (SRMADFARPTALHR) the chain is Cytoplasmic. Residues 511–531 (IYTLTWMFVLAWVLLVISTVY) form a helical membrane-spanning segment. Topologically, residues 532–535 (QNQR) are vacuolar. The chain crosses the membrane as a helical span at residues 536-556 (GLAGSYSVFFFFSGTFLATWI). Over 557 to 668 (SYLELFSLPR…SASLPTWTWT (112 aa)) the chain is Cytoplasmic. Polar residues predominate over residues 573–585 (QNRPTSRRASSYG). Residues 573 to 622 (QNRPTSRRASSYGGSRLGTASGEDHEEDDHDAEEEEEEQEPTESTSLLGG) are disordered. Residues 596 to 613 (DHEEDDHDAEEEEEEQEP) show a composition bias toward acidic residues. The helical transmembrane segment at 669–689 (LQFLLMAPLVLIMVGPLALLL) threads the bilayer. At 690–704 (TSALHQTGQDGSSSL) the chain is on the vacuolar side. Residues 705–725 (FIYVAIAALTTFLLTPLLPFI) form a helical membrane-spanning segment. Topologically, residues 726–732 (HRHTYHL) are cytoplasmic. Residues 733–753 (PVFLLLVFLGTLIYNLVAFPF) form a helical membrane-spanning segment. The Vacuolar portion of the chain corresponds to 754–986 (SPTNRLKLFF…LVEGWKGFSI (233 aa)). Residues Asn799, Asn840, and Asn948 are each glycosylated (N-linked (GlcNAc...) asparagine). The disordered stretch occupies residues 840-859 (NTTDDKEGDEDTHHPRKARI).

Belongs to the peptidase M28 family. The cofactor is Zn(2+).

Its subcellular location is the vacuole membrane. Its function is as follows. May be involved in vacuolar sorting and osmoregulation. The protein is Vacuolar membrane protease of Aspergillus niger (strain ATCC MYA-4892 / CBS 513.88 / FGSC A1513).